We begin with the raw amino-acid sequence, 230 residues long: 7-cyano-7-deazaguanine synthase (230 aa).

Position 16–26 (16–26) interacts with ATP; the sequence is LSGGLDSATVV. Zn(2+) is bound by residues cysteine 195, cysteine 205, cysteine 208, and cysteine 211.

The protein belongs to the QueC family. Requires Zn(2+) as cofactor.

It catalyses the reaction 7-carboxy-7-deazaguanine + NH4(+) + ATP = 7-cyano-7-deazaguanine + ADP + phosphate + H2O + H(+). It functions in the pathway purine metabolism; 7-cyano-7-deazaguanine biosynthesis. In terms of biological role, catalyzes the ATP-dependent conversion of 7-carboxy-7-deazaguanine (CDG) to 7-cyano-7-deazaguanine (preQ(0)). The sequence is that of 7-cyano-7-deazaguanine synthase from Pseudomonas fluorescens (strain Pf0-1).